The following is a 349-amino-acid chain: Isopentenyl-diphosphate delta-isomerase (349 aa).

Substrate is bound at residue 12–13; sequence RK. Residues 69 to 71, Ser-99, and Asn-128 contribute to the FMN site; that span reads GMT. Substrate is bound at residue Gln-158. Glu-159 contacts Mg(2+). FMN is bound by residues Lys-189, Ser-214, Thr-219, 265–267, and 286–287; these read GIR and SG.

It belongs to the IPP isomerase type 2 family. As to quaternary structure, homooctamer. Dimer of tetramers. It depends on FMN as a cofactor. NADPH is required as a cofactor. The cofactor is Mg(2+).

The protein localises to the cytoplasm. The enzyme catalyses isopentenyl diphosphate = dimethylallyl diphosphate. Functionally, involved in the biosynthesis of isoprenoids. Catalyzes the 1,3-allylic rearrangement of the homoallylic substrate isopentenyl (IPP) to its allylic isomer, dimethylallyl diphosphate (DMAPP). This Latilactobacillus sakei subsp. sakei (strain 23K) (Lactobacillus sakei subsp. sakei) protein is Isopentenyl-diphosphate delta-isomerase.